The following is a 315-amino-acid chain: 4-hydroxy-3-methylbut-2-enyl diphosphate reductase (315 aa).

A [4Fe-4S] cluster-binding site is contributed by Cys12. (2E)-4-hydroxy-3-methylbut-2-enyl diphosphate-binding residues include His41 and His74. Dimethylallyl diphosphate contacts are provided by His41 and His74. The isopentenyl diphosphate site is built by His41 and His74. Cys96 contributes to the [4Fe-4S] cluster binding site. (2E)-4-hydroxy-3-methylbut-2-enyl diphosphate is bound at residue His124. His124 serves as a coordination point for dimethylallyl diphosphate. His124 lines the isopentenyl diphosphate pocket. The active-site Proton donor is the Glu126. Thr168 lines the (2E)-4-hydroxy-3-methylbut-2-enyl diphosphate pocket. Residue Cys198 participates in [4Fe-4S] cluster binding. Residues Ser226, Ser227, Asn228, and Ser270 each contribute to the (2E)-4-hydroxy-3-methylbut-2-enyl diphosphate site. Dimethylallyl diphosphate contacts are provided by Ser226, Ser227, Asn228, and Ser270. Isopentenyl diphosphate-binding residues include Ser226, Ser227, Asn228, and Ser270.

This sequence belongs to the IspH family. Requires [4Fe-4S] cluster as cofactor.

The enzyme catalyses isopentenyl diphosphate + 2 oxidized [2Fe-2S]-[ferredoxin] + H2O = (2E)-4-hydroxy-3-methylbut-2-enyl diphosphate + 2 reduced [2Fe-2S]-[ferredoxin] + 2 H(+). It carries out the reaction dimethylallyl diphosphate + 2 oxidized [2Fe-2S]-[ferredoxin] + H2O = (2E)-4-hydroxy-3-methylbut-2-enyl diphosphate + 2 reduced [2Fe-2S]-[ferredoxin] + 2 H(+). It functions in the pathway isoprenoid biosynthesis; dimethylallyl diphosphate biosynthesis; dimethylallyl diphosphate from (2E)-4-hydroxy-3-methylbutenyl diphosphate: step 1/1. The protein operates within isoprenoid biosynthesis; isopentenyl diphosphate biosynthesis via DXP pathway; isopentenyl diphosphate from 1-deoxy-D-xylulose 5-phosphate: step 6/6. In terms of biological role, catalyzes the conversion of 1-hydroxy-2-methyl-2-(E)-butenyl 4-diphosphate (HMBPP) into a mixture of isopentenyl diphosphate (IPP) and dimethylallyl diphosphate (DMAPP). Acts in the terminal step of the DOXP/MEP pathway for isoprenoid precursor biosynthesis. The polypeptide is 4-hydroxy-3-methylbut-2-enyl diphosphate reductase (Pseudomonas entomophila (strain L48)).